The following is a 106-amino-acid chain: MMKVLVVVALLVTLISYSSSEGIDDLETDELLSLMANEQTRAKACTPRYYDCSHDRHSCCRSSMFKDVCTCFYPEGGDNKEVCTCQQPKHLKYMEKATDKIKNLFG.

The first 20 residues, 1-20, serve as a signal peptide directing secretion; the sequence is MMKVLVVVALLVTLISYSSS. A propeptide spanning residues 21–41 is cleaved from the precursor; sequence EGIDDLETDELLSLMANEQTR. Cystine bridges form between Cys-45/Cys-60, Cys-52/Cys-69, Cys-59/Cys-85, and Cys-71/Cys-83.

This sequence belongs to the neurotoxin 19 (CSTX) family. 02 (D7) subfamily. In terms of tissue distribution, expressed by the venom gland.

Its subcellular location is the secreted. The sequence is that of Toxin-like structure LSTX-D5 from Lycosa singoriensis (Wolf spider).